The chain runs to 228 residues: Caspase recruitment domain-containing protein 19 (228 aa).

The cysteines at positions 7 and 77 are disulfide-linked. One can recognise a CARD domain in the interval 8-99 (DRLVQDTPFL…PLHSRLPSRH (92 aa)). Phosphoserine is present on valine 113.

In terms of assembly, associates with BCL10 by CARD-CARD interaction. Expressed in ovary, testis, placenta, skeletal muscle, kidney, lung, heart and liver (at protein level). Expressed in thymus and brain.

The protein localises to the nucleus. Its subcellular location is the endoplasmic reticulum membrane. It is found in the mitochondrion membrane. Its function is as follows. Plays a role in inhibiting the effects of BCL10-induced activation of NF-kappa-B. May inhibit the phosphorylation of BCL10 in a CARD-dependent manner. This chain is Caspase recruitment domain-containing protein 19 (CARD19), found in Homo sapiens (Human).